The chain runs to 79 residues: Probable [Fe-S]-dependent transcriptional repressor (79 aa).

Iron-sulfur cluster-binding residues include cysteine 56, cysteine 61, cysteine 64, and cysteine 71.

This sequence belongs to the FeoC family.

Functionally, may function as a transcriptional regulator that controls feoABC expression. The polypeptide is Probable [Fe-S]-dependent transcriptional repressor (Klebsiella pneumoniae (strain 342)).